Here is a 984-residue protein sequence, read N- to C-terminus: Pre-mRNA-splicing factor cwf10 (984 aa).

The interval methionine 1–glutamine 28 is disordered. The 264-residue stretch at aspartate 139–glutamate 402 folds into the tr-type G domain. Residues glycine 148–serine 155 are G1. Glycine 148–serine 155 is a GTP binding site. The G2 stretch occupies residues valine 190–lysine 194. Positions aspartate 216–glycine 219 are G3. Residues aspartate 216–histidine 220 and asparagine 270–aspartate 273 each bind GTP. The interval asparagine 270 to aspartate 273 is G4. The interval glutamine 371–leucine 373 is G5.

This sequence belongs to the TRAFAC class translation factor GTPase superfamily. Classic translation factor GTPase family. EF-G/EF-2 subfamily. Belongs to the 40S cdc5-associated complex (or cwf complex), a spliceosome sub-complex reminiscent of a late-stage spliceosome composed of the U2, U5 and U6 snRNAs and at least brr2, cdc5, cwf2/prp3, cwf3/syf1, cwf4/syf3, cwf5/ecm2, spp42/cwf6, cwf7/spf27, cwf8, cwf9, cwf10, cwf11, cwf12, prp45/cwf13, cwf14, cwf15, cwf16, cwf17, cwf18, cwf19, cwf20, cwf21, cwf22, cwf23, cwf24, cwf25, cwf26, cyp7/cwf27, cwf28, cwf29/ist3, lea1, msl1, prp5/cwf1, prp10, prp12/sap130, prp17, prp22, sap61, sap62, sap114, sap145, slu7, smb1, smd1, smd3, smf1, smg1 and syf2.

It localises to the cytoplasm. It is found in the nucleus. In terms of biological role, component of the U5 snRNP complex required for pre-mRNA splicing. Binds GTP. The sequence is that of Pre-mRNA-splicing factor cwf10 (cwf10) from Schizosaccharomyces pombe (strain 972 / ATCC 24843) (Fission yeast).